A 384-amino-acid chain; its full sequence is Cyclohexane-1-carbonyl-CoA dehydrogenase (384 aa).

It belongs to the acyl-CoA dehydrogenase family. As to quaternary structure, homotetramer. FAD is required as a cofactor.

The enzyme catalyses cyclohexane-1-carbonyl-CoA + oxidized [electron-transfer flavoprotein] + H(+) = cyclohex-1-ene-1-carbonyl-CoA + reduced [electron-transfer flavoprotein]. Its function is as follows. Mediates the conversion of cyclohexane-1-carbonyl-CoA (ChCoA) into cyclohex-1-ene-1-carbonyl-CoA in biosynthesis of cyclohexane-1-carboxylate, a by-product produced during fermentation of benzoate and crotonate to acetate. The protein is Cyclohexane-1-carbonyl-CoA dehydrogenase of Syntrophus aciditrophicus (strain SB).